The chain runs to 464 residues: Dihydrolipoyllysine-residue succinyltransferase component of 2-oxoglutarate dehydrogenase complex 1, mitochondrial (464 aa).

A mitochondrion-targeting transit peptide spans 1–86 (MMLRAVFRRA…TALQRWVRPF (86 aa)). In terms of domain architecture, Lipoyl-binding spans 93-168 (VVEAVVPHMG…EPGNKVARIS (76 aa)). N6-lipoyllysine is present on Lys134. The tract at residues 168-242 (STSADAVSHV…DRERRVPMTR (75 aa)) is disordered. The span at 196–210 (EKPKVESTKVAEKPK) shows a compositional bias: basic and acidic residues. Over residues 211-220 (APSPPPPPPS) the composition is skewed to pro residues. Catalysis depends on residues His435 and Asp439.

The protein belongs to the 2-oxoacid dehydrogenase family. Forms a 24-polypeptide structural core with octahedral symmetry. The cofactor is (R)-lipoate.

The protein localises to the mitochondrion. The enzyme catalyses N(6)-[(R)-dihydrolipoyl]-L-lysyl-[protein] + succinyl-CoA = N(6)-[(R)-S(8)-succinyldihydrolipoyl]-L-lysyl-[protein] + CoA. It functions in the pathway amino-acid degradation; L-lysine degradation via saccharopine pathway; glutaryl-CoA from L-lysine: step 6/6. The 2-oxoglutarate dehydrogenase complex catalyzes the overall conversion of 2-oxoglutarate to succinyl-CoA and CO(2). It contains multiple copies of three enzymatic components: 2-oxoglutarate dehydrogenase (E1), dihydrolipoamide succinyltransferase (E2) and lipoamide dehydrogenase (E3). The chain is Dihydrolipoyllysine-residue succinyltransferase component of 2-oxoglutarate dehydrogenase complex 1, mitochondrial from Arabidopsis thaliana (Mouse-ear cress).